Consider the following 706-residue polypeptide: Probable serine/threonine-protein kinase zyg-1 (706 aa).

One can recognise a Protein kinase domain in the interval 13-249 (YSHLKEIGKG…LTQIVLSEFM (237 aa)). ATP-binding positions include 19–27 (IGKGGFGVV) and lysine 41. Aspartate 131 functions as the Proton acceptor in the catalytic mechanism. Basic and acidic residues-rich tracts occupy residues 261–290 (SREHSRDGRRQRSREPVRSSRDDRSRDGRA) and 323–336 (FDSERGRERDRDSG). 2 disordered regions span residues 261-351 (SREH…NRSQ) and 566-632 (SPSS…VAPS). A compositionally biased stretch (low complexity) spans 566 to 579 (SPSSLMPSGSSQTS). 2 stretches are compositionally biased toward polar residues: residues 580–592 (RFPFSNLSNNQPS) and 603–629 (KPTSSQRASSANVQRRVSTDENSSPSV).

This sequence belongs to the protein kinase superfamily. Ser/Thr protein kinase family. As to quaternary structure, interacts with sel-10. Probably ubiquitinated by the SCF(sel-10) and SCF(lin-23) E3 ubiquitin ligase complexes, leading to its proteasomal degradation.

It localises to the cytoplasm. The protein resides in the cytoskeleton. Its subcellular location is the microtubule organizing center. The protein localises to the centrosome. It is found in the centriole. It catalyses the reaction L-seryl-[protein] + ATP = O-phospho-L-seryl-[protein] + ADP + H(+). The enzyme catalyses L-threonyl-[protein] + ATP = O-phospho-L-threonyl-[protein] + ADP + H(+). In terms of biological role, protein kinase that plays a central role in centrosome duplication, control of centrosome size, spindle formation and nuclear envelope breakdown during cell divisions. Paternal copy is required to regulate synthesis of daughter centrioles prior to fertilization. Maternal copy regulates centrosome duplication during later cell cycles. Functions upstream of sas-5 and sas-6, and is required for their localization to the centrosome. Its role in nuclear envelope breakdown is mediated by the spindly-like protein spdl-1 and the RZZ complex, which in turn recruits the spindle checkpoint proteins mdf-1 and mdf-2, dynein and dynactin to unattached kinetochores. The polypeptide is Probable serine/threonine-protein kinase zyg-1 (Caenorhabditis elegans).